Reading from the N-terminus, the 346-residue chain is Sulfate/thiosulfate import ATP-binding protein CysA (346 aa).

Residues 3-237 (VRVANVRKEF…PNSPFVYGFI (235 aa)) form the ABC transporter domain. An ATP-binding site is contributed by 35-42 (GPSGSGKT).

Belongs to the ABC transporter superfamily. Sulfate/tungstate importer (TC 3.A.1.6) family. As to quaternary structure, the complex is composed of two ATP-binding proteins (CysA), two transmembrane proteins (CysT and CysW) and a solute-binding protein (CysP).

It is found in the cell inner membrane. It carries out the reaction sulfate(out) + ATP + H2O = sulfate(in) + ADP + phosphate + H(+). It catalyses the reaction thiosulfate(out) + ATP + H2O = thiosulfate(in) + ADP + phosphate + H(+). Part of the ABC transporter complex CysAWTP involved in sulfate/thiosulfate import. Responsible for energy coupling to the transport system. The sequence is that of Sulfate/thiosulfate import ATP-binding protein CysA from Mesorhizobium japonicum (strain LMG 29417 / CECT 9101 / MAFF 303099) (Mesorhizobium loti (strain MAFF 303099)).